Consider the following 277-residue polypeptide: MSCWTYLGRARGPRASAPTARRFFANFFNDLIVAVSSTVGALKTSQQTPLKMSQDMSHVPEAIRMVLIGPPGAGKGTQAPKLKEKFCVCHLATGDMLRSQVAKQTALGVQAKKIMDQGGLVSDEIMVNMIKDELRSNPECANGFILDGFPRTIPQAQKLDEMLVAQGKPLDRAVELKIDDELLVARITGRLVHPASGRSYHKLFNPPKVAMTDDVTGDPLVQRSDDNADALKKRLDAYHAQTEPIVDFYKKTGIWAGVDASQPPKTVWSDILKALGK.

72-77 contributes to the ATP binding site; that stretch reads GAGKGT. Positions 92 to 121 are NMP; sequence ATGDMLRSQVAKQTALGVQAKKIMDQGGLV. AMP contacts are provided by residues threonine 93, arginine 98, 119-121, 148-151, and glutamine 155; these read GLV and GFPR. Residues 189-226 are LID; that stretch reads GRLVHPASGRSYHKLFNPPKVAMTDDVTGDPLVQRSDD. ATP is bound by residues arginine 190 and 199-200; that span reads SY. 2 residues coordinate AMP: arginine 223 and arginine 234. Residue glutamine 262 participates in ATP binding.

The protein belongs to the adenylate kinase family. AK2 subfamily. Monomer.

Its subcellular location is the cytoplasm. The protein localises to the cytosol. The protein resides in the mitochondrion intermembrane space. It catalyses the reaction AMP + ATP = 2 ADP. Catalyzes the reversible transfer of the terminal phosphate group between ATP and AMP. Plays an important role in cellular energy homeostasis and in adenine nucleotide metabolism. Adenylate kinase activity is critical for regulation of the phosphate utilization and the AMP de novo biosynthesis pathways. In Eremothecium gossypii (strain ATCC 10895 / CBS 109.51 / FGSC 9923 / NRRL Y-1056) (Yeast), this protein is Adenylate kinase.